The following is a 200-amino-acid chain: LHFPL tetraspan subfamily member 6 protein (200 aa).

A signal peptide spans methionine 1–serine 23. Transmembrane regions (helical) follow at residues isoleucine 84–leucine 104, glycine 123–tryptophan 143, and isoleucine 166–tryptophan 186.

This sequence belongs to the LHFP family.

It is found in the membrane. The sequence is that of LHFPL tetraspan subfamily member 6 protein from Rattus norvegicus (Rat).